The sequence spans 205 residues: Adenylyl-sulfate kinase (205 aa).

Residue 31–38 participates in ATP binding; the sequence is GLSGAGKS. The active-site Phosphoserine intermediate is serine 105.

Belongs to the APS kinase family.

It carries out the reaction adenosine 5'-phosphosulfate + ATP = 3'-phosphoadenylyl sulfate + ADP + H(+). It participates in sulfur metabolism; hydrogen sulfide biosynthesis; sulfite from sulfate: step 2/3. Its function is as follows. Catalyzes the synthesis of activated sulfate. The protein is Adenylyl-sulfate kinase of Shewanella oneidensis (strain ATCC 700550 / JCM 31522 / CIP 106686 / LMG 19005 / NCIMB 14063 / MR-1).